The following is a 246-amino-acid chain: MLLIPAIDLKDGHCVRLKQGDMDQSTTFSEEPFVMARNWVDKGARRLHLVDLNGAFAGHPKNELAIRKILKDVGSEVDVQLGGGIRDLDTIERYLDAGLRYVIIGTAAVKNPGFLQDACTAFGGHIIVGLDARDGKIATDGWSKLTRHDVVDLAKKFEDYGVESIIYTDISRDGMLSGINIEATVRLAQALTIPVIASGGLSGMADIEALCAVENEGIEGVICGRAIYSGDLDFEAAQERANELNG.

Residue Asp8 is the Proton acceptor of the active site. Asp131 serves as the catalytic Proton donor.

It belongs to the HisA/HisF family.

The protein resides in the cytoplasm. It catalyses the reaction 1-(5-phospho-beta-D-ribosyl)-5-[(5-phospho-beta-D-ribosylamino)methylideneamino]imidazole-4-carboxamide = 5-[(5-phospho-1-deoxy-D-ribulos-1-ylimino)methylamino]-1-(5-phospho-beta-D-ribosyl)imidazole-4-carboxamide. It functions in the pathway amino-acid biosynthesis; L-histidine biosynthesis; L-histidine from 5-phospho-alpha-D-ribose 1-diphosphate: step 4/9. The chain is 1-(5-phosphoribosyl)-5-[(5-phosphoribosylamino)methylideneamino] imidazole-4-carboxamide isomerase from Albidiferax ferrireducens (strain ATCC BAA-621 / DSM 15236 / T118) (Rhodoferax ferrireducens).